A 684-amino-acid polypeptide reads, in one-letter code: Dipeptidyl-peptidase 5 (684 aa).

A signal peptide spans 1–24 (MNKKIFSMMAASIIGSAAMTPSAG). 3 WD repeats span residues 87–127 (DTES…TERR), 220–259 (KPWS…DIYI), and 323–363 (TFDY…GKIR). Residues Ser542, Asp627, and His659 each act as charge relay system in the active site.

It belongs to the peptidase S9C family. Homodimer.

Its subcellular location is the periplasm. Catalyzes the removal of dipeptides from the N-terminus of oligopeptides. Prefers Ala and hydrophobic residues except Pro at the P1 position, and has no preference for P2 residues. Shows high dipeptidyl peptidase activity toward the synthetic substrates Lys-Ala-, Gly-Phe-, Met-Leu-, and Ser-Tyr-methylcoumaryl-7-amide (MCA), and slowly hydrolyzes Val-Tyr-MCA. Is likely involved in amino acid metabolism and bacterial growth of asaccharolytic P.gingivalis, that utilizes amino acids from extracellular proteinaceous nutrients as energy and carbon sources. The chain is Dipeptidyl-peptidase 5 from Porphyromonas gingivalis (strain ATCC 33277 / DSM 20709 / CIP 103683 / JCM 12257 / NCTC 11834 / 2561).